Consider the following 156-residue polypeptide: Cyanate hydratase (156 aa).

Residues Arg96, Glu99, and Ser122 contribute to the active site.

This sequence belongs to the cyanase family.

It carries out the reaction cyanate + hydrogencarbonate + 3 H(+) = NH4(+) + 2 CO2. Catalyzes the reaction of cyanate with bicarbonate to produce ammonia and carbon dioxide. This is Cyanate hydratase from Photorhabdus laumondii subsp. laumondii (strain DSM 15139 / CIP 105565 / TT01) (Photorhabdus luminescens subsp. laumondii).